A 208-amino-acid polypeptide reads, in one-letter code: Pyridoxine/pyridoxamine 5'-phosphate oxidase (208 aa).

FMN is bound by residues 55–60 (RMVLLK), 70–71 (YT), Lys76, Lys77, and Gln99. Lys60 lines the substrate pocket. Substrate is bound by residues Tyr117, Arg121, and Ser125. FMN is bound by residues 134-135 (QS) and Trp179. 185 to 187 (RLH) is a binding site for substrate. Arg189 lines the FMN pocket.

It belongs to the pyridoxamine 5'-phosphate oxidase family. As to quaternary structure, homodimer. Requires FMN as cofactor.

The catalysed reaction is pyridoxamine 5'-phosphate + O2 + H2O = pyridoxal 5'-phosphate + H2O2 + NH4(+). It carries out the reaction pyridoxine 5'-phosphate + O2 = pyridoxal 5'-phosphate + H2O2. The protein operates within cofactor metabolism; pyridoxal 5'-phosphate salvage; pyridoxal 5'-phosphate from pyridoxamine 5'-phosphate: step 1/1. Its pathway is cofactor metabolism; pyridoxal 5'-phosphate salvage; pyridoxal 5'-phosphate from pyridoxine 5'-phosphate: step 1/1. Catalyzes the oxidation of either pyridoxine 5'-phosphate (PNP) or pyridoxamine 5'-phosphate (PMP) into pyridoxal 5'-phosphate (PLP). This is Pyridoxine/pyridoxamine 5'-phosphate oxidase from Brucella ovis (strain ATCC 25840 / 63/290 / NCTC 10512).